We begin with the raw amino-acid sequence, 396 residues long: ATP phosphoribosyltransferase regulatory subunit (396 aa).

It belongs to the class-II aminoacyl-tRNA synthetase family. HisZ subfamily. Heteromultimer composed of HisG and HisZ subunits.

The protein localises to the cytoplasm. It functions in the pathway amino-acid biosynthesis; L-histidine biosynthesis; L-histidine from 5-phospho-alpha-D-ribose 1-diphosphate: step 1/9. Its function is as follows. Required for the first step of histidine biosynthesis. May allow the feedback regulation of ATP phosphoribosyltransferase activity by histidine. The sequence is that of ATP phosphoribosyltransferase regulatory subunit from Cellvibrio japonicus (strain Ueda107) (Pseudomonas fluorescens subsp. cellulosa).